The chain runs to 653 residues: Glyceraldehyde-3-phosphate:ferredoxin oxidoreductase (653 aa).

Arg70, Gly89, Arg196, Ala197, Gly199, and Arg206 together coordinate tungstopterin. 2 residues coordinate [4Fe-4S] cluster: Cys333 and Cys337. The tungstopterin site is built by Asp378, Asp383, and Asp544. Cys549 lines the [4Fe-4S] cluster pocket.

The protein belongs to the AOR/FOR family. Monomer. It depends on [4Fe-4S] cluster as a cofactor. Tungstopterin serves as cofactor.

It catalyses the reaction D-glyceraldehyde 3-phosphate + 2 oxidized [2Fe-2S]-[ferredoxin] + H2O = (2R)-3-phosphoglycerate + 2 reduced [2Fe-2S]-[ferredoxin] + 3 H(+). Sensitive to oxygen. Activity increased by 58%-93% in the presence of acetyl phosphate, 3-phosphoglycerate or 2,3-bisphosphoglycerate at 10 mM concentration. Inhibited by up to 25% in the presence of crotonaldehyde or formaldehyde at 10 mM concentration. Inhibited by up to 50% by sodium dithionate. 3.5-fold increase in activity observed by addition of potassium phosphate or sodium arsenate at 200 mM concentration. Activity enhanced by potassium chloride, sodium citrate or sodium sulfate at 200 mM concentration. Functionally, catalyzes the oxidation of glyceraldehyde-3-phosphate to 3-phosphoglycerate. Uses ferredoxin as electron acceptor. In vitro can also use benzyl viologen, but not NADP or NAD, as electron acceptor. Probably acts as a glycolytic enzyme in place of glyceraldehyde-3-phosphate dehydrogenase (GAPDH) and phosphoglycerate kinase (PGK) in an unusual Emden-Meyerhof glycolysis. This chain is Glyceraldehyde-3-phosphate:ferredoxin oxidoreductase, found in Pyrococcus furiosus (strain ATCC 43587 / DSM 3638 / JCM 8422 / Vc1).